Consider the following 95-residue polypeptide: Co-chaperonin GroES (95 aa).

It belongs to the GroES chaperonin family. Heptamer of 7 subunits arranged in a ring. Interacts with the chaperonin GroEL.

It localises to the cytoplasm. Together with the chaperonin GroEL, plays an essential role in assisting protein folding. The GroEL-GroES system forms a nano-cage that allows encapsulation of the non-native substrate proteins and provides a physical environment optimized to promote and accelerate protein folding. GroES binds to the apical surface of the GroEL ring, thereby capping the opening of the GroEL channel. This chain is Co-chaperonin GroES, found in Streptococcus salivarius.